We begin with the raw amino-acid sequence, 354 residues long: Putative ankyrin repeat protein L284 (354 aa).

3 ANK repeats span residues 201–230 (ILDDILTLIIKSGNVSAFKTLINIIGLSND), 253–284 (SRYPQLYLESSIINGRTDIVDNLVKKGSNPIV), and 286–314 (LHKAAECAQFDIIWNLSENSLINQNDIDI).

The chain is Putative ankyrin repeat protein L284 from Acanthamoeba polyphaga (Amoeba).